We begin with the raw amino-acid sequence, 658 residues long: MPLFDLKSPYPPAGDQPQAIEALAKSLKNNNHYQTLVGVTGSGKTYTMANIIAQTNKPALIMSHNKTLCAQLYSEFKAFFPHNRVEYFISHFDYYQPESYIPRRDLFIEKDSSINDDLERLRLSATTSLLGYDDVIVIASVSANYGLGNPEEYLKVMEKIKVGEKRAYKNFLLKLVEMGYSRNEVVFDRGSFRATGECVDIFPAYNDAEFIRIEFFGDEIERIAVFDALEKNEIKRLDSVMLYAASQFAVGSERLNLAIKSIEDELALRLKFFKEQDKMLEYNRLKQRTEHDLEMISATGVCKGIENYARHFTGKAPNETPFCLFDYLGIFEREFLVIVDESHVSLPQFGGMYAGDMSRKSVLVEYGFRLPSALDNRPLKFDEFIHKNCQFLFVSATPNKLELELSKKNVAEQIIRPTGLLDPKFEVRDSDKQVQDLFDEIKLVVARDERVLITTLTKKMAEELCKYYAEWGLKVRYMHSEIDAIERNHIIRSLRLKEFDILIGINLLREGLDLPEVSLVAIMDADKEGFLRSETSLIQTMGRAARNANGKVLLYAKKITQSMQKAFEITSYRRAKQEEFNKIHNITPKTVTRALEEELKLRDDEIRIAKALKKDKMPKSEREKIIKELDKKMRECAKNLDFEEAMRLRDEIAKLRTL.

The 154-residue stretch at 25–178 (KSLKNNNHYQ…KNFLLKLVEM (154 aa)) folds into the Helicase ATP-binding domain. 38-45 (GVTGSGKT) contributes to the ATP binding site. Positions 91 to 114 (HFDYYQPESYIPRRDLFIEKDSSI) match the Beta-hairpin motif. Residues 433–607 (QVQDLFDEIK…ELKLRDDEIR (175 aa)) form the Helicase C-terminal domain. Residues 623 to 658 (EKIIKELDKKMRECAKNLDFEEAMRLRDEIAKLRTL) form the UVR domain.

This sequence belongs to the UvrB family. In terms of assembly, forms a heterotetramer with UvrA during the search for lesions. Interacts with UvrC in an incision complex.

It localises to the cytoplasm. Its function is as follows. The UvrABC repair system catalyzes the recognition and processing of DNA lesions. A damage recognition complex composed of 2 UvrA and 2 UvrB subunits scans DNA for abnormalities. Upon binding of the UvrA(2)B(2) complex to a putative damaged site, the DNA wraps around one UvrB monomer. DNA wrap is dependent on ATP binding by UvrB and probably causes local melting of the DNA helix, facilitating insertion of UvrB beta-hairpin between the DNA strands. Then UvrB probes one DNA strand for the presence of a lesion. If a lesion is found the UvrA subunits dissociate and the UvrB-DNA preincision complex is formed. This complex is subsequently bound by UvrC and the second UvrB is released. If no lesion is found, the DNA wraps around the other UvrB subunit that will check the other stand for damage. The polypeptide is UvrABC system protein B (Helicobacter pylori (strain HPAG1)).